Reading from the N-terminus, the 592-residue chain is Prospero homeobox protein 2 (592 aa).

Disordered regions lie at residues 20-56 (EACT…PEWF), 85-129 (GNAQ…RKGG), 155-218 (KPRD…LPSG), 308-336 (RLDS…PLTA), and 353-382 (RYNN…LRPW). Residues 95 to 106 (CPKKARERKRKQ) show a composition bias toward basic residues. The segment covering 201–211 (SGAEKHQESEK) has biased composition (basic and acidic residues). Pro residues predominate over residues 314–331 (YPIPPRMTPKPCQDPPAN). Residues 360-377 (SSSPPQDSSSQRHPSSEP) are compositionally biased toward low complexity. The Prospero-type homeo domain occupies 437-495 (QEGLNPGHLKKAKLMFFFTRYPSSNLLKVYFPDVQFNRCITSQMIKWFSNFREFYYIQM). The homeo-Prospero stretch occupies residues 437 to 592 (QEGLNPGHLK…EIFKSSSYPQ (156 aa)). In terms of domain architecture, Prospero spans 496 to 592 (EKSARQAISD…EIFKSSSYPQ (97 aa)).

It belongs to the Prospero homeodomain family.

The protein localises to the nucleus. Its function is as follows. Transcription regulator. Does not seem to be essential for embryonic development and postnatal survival. The chain is Prospero homeobox protein 2 (PROX2) from Homo sapiens (Human).